Here is a 218-residue protein sequence, read N- to C-terminus: uncharacterized protein (218 aa).

The interval 1–24 (MAAQPQAPSAGGRPRAGKAVKSVA) is disordered. Residues 28–88 (KLSRESIVEG…AVRIRVIDDI (61 aa)) form the HTH tetR-type domain. A DNA-binding region (H-T-H motif) is located at residues 51 to 70 (TINALATQLGTKGPSLYNHV). Thr57 carries the phosphothreonine; by PknH modification.

In terms of processing, phosphorylated on Thr-57 by PknH.

This is an uncharacterized protein from Mycobacterium tuberculosis (strain ATCC 25618 / H37Rv).